The chain runs to 750 residues: Photosystem I P700 chlorophyll a apoprotein A1 (750 aa).

The next 8 helical transmembrane spans lie at 70 to 93 (IFSA…FHGA), 156 to 179 (LYCT…FHYH), 195 to 219 (LNHH…HVSL), 291 to 309 (IAHH…GHMY), 346 to 369 (WHAQ…HHMY), 385 to 411 (LSLF…IFMV), 433 to 455 (AIIS…LYIH), and 531 to 549 (FLVH…LILL). Residues Cys573 and Cys582 each contribute to the [4Fe-4S] cluster site. Helical transmembrane passes span 589–610 (HVFL…HFSW) and 664–686 (LSAY…MFLF). His675 serves as a coordination point for chlorophyll a'. Chlorophyll a contacts are provided by Met683 and Tyr691. Phylloquinone is bound at residue Trp692. Residues 724–744 (AVGVTHYLLGGIATTWAFFLA) traverse the membrane as a helical segment.

Belongs to the PsaA/PsaB family. As to quaternary structure, the PsaA/B heterodimer binds the P700 chlorophyll special pair and subsequent electron acceptors. PSI consists of a core antenna complex that captures photons, and an electron transfer chain that converts photonic excitation into a charge separation. The eukaryotic PSI reaction center is composed of at least 11 subunits. Requires P700 is a chlorophyll a/chlorophyll a' dimer, A0 is one or more chlorophyll a, A1 is one or both phylloquinones and FX is a shared 4Fe-4S iron-sulfur center. as cofactor.

The protein resides in the plastid. Its subcellular location is the chloroplast thylakoid membrane. It carries out the reaction reduced [plastocyanin] + hnu + oxidized [2Fe-2S]-[ferredoxin] = oxidized [plastocyanin] + reduced [2Fe-2S]-[ferredoxin]. In terms of biological role, psaA and PsaB bind P700, the primary electron donor of photosystem I (PSI), as well as the electron acceptors A0, A1 and FX. PSI is a plastocyanin-ferredoxin oxidoreductase, converting photonic excitation into a charge separation, which transfers an electron from the donor P700 chlorophyll pair to the spectroscopically characterized acceptors A0, A1, FX, FA and FB in turn. Oxidized P700 is reduced on the lumenal side of the thylakoid membrane by plastocyanin. This Gossypium hirsutum (Upland cotton) protein is Photosystem I P700 chlorophyll a apoprotein A1.